The sequence spans 164 residues: UPF0114 protein KPK_0696 (164 aa).

4 consecutive transmembrane segments (helical) span residues 15-35 (LLAP…IKFF), 53-73 (LILT…LVMV), 109-126 (VAAS…RVFM), and 136-156 (LMWY…MGYL).

Belongs to the UPF0114 family.

The protein resides in the cell membrane. The polypeptide is UPF0114 protein KPK_0696 (Klebsiella pneumoniae (strain 342)).